A 41-amino-acid chain; its full sequence is Large ribosomal subunit protein bL36B (41 aa).

The protein belongs to the bacterial ribosomal protein bL36 family.

In Neisseria meningitidis serogroup C (strain 053442), this protein is Large ribosomal subunit protein bL36B.